Here is a 593-residue protein sequence, read N- to C-terminus: Arginine--tRNA ligase (593 aa).

Positions 138–148 match the 'HIGH' region motif; sequence ANPTGPLHVGH.

This sequence belongs to the class-I aminoacyl-tRNA synthetase family. As to quaternary structure, monomer.

Its subcellular location is the cytoplasm. It carries out the reaction tRNA(Arg) + L-arginine + ATP = L-arginyl-tRNA(Arg) + AMP + diphosphate. In Burkholderia ambifaria (strain ATCC BAA-244 / DSM 16087 / CCUG 44356 / LMG 19182 / AMMD) (Burkholderia cepacia (strain AMMD)), this protein is Arginine--tRNA ligase.